The following is a 467-amino-acid chain: Translation initiation factor eIF2B subunit delta (467 aa).

The interval 1 to 106 (MGFSAEQAKK…QNPQNSPETD (106 aa)) is disordered. A phosphoserine mark is found at Ser-16, Ser-19, Ser-21, and Ser-23. Residues 16 to 37 (SPVSESSSVGGTSPATASSVVS) show a composition bias toward polar residues. Thr-27 bears the Phosphothreonine mark. A phosphoserine mark is found at Ser-28 and Ser-37. Basic residues predominate over residues 51–61 (LKKARKQASRR). Residues 84 to 102 (PNKNSNQQKKASKQNPQNS) show a composition bias toward low complexity.

It belongs to the eIF-2B alpha/beta/delta subunits family. Component of the translation initiation factor 2B (eIF2B) complex which is a heterodecamer of two sets of five different subunits: alpha, beta, gamma, delta and epsilon. Subunits alpha, beta and delta comprise a regulatory subcomplex and subunits epsilon and gamma comprise a catalytic subcomplex. Within the complex, the hexameric regulatory complex resides at the center, with the two heterodimeric catalytic subcomplexes bound on opposite sides.

The protein resides in the cytoplasm. The protein localises to the cytosol. Functionally, acts as a component of the translation initiation factor 2B (eIF2B) complex, which catalyzes the exchange of GDP for GTP on the eukaryotic initiation factor 2 (eIF2) complex gamma subunit. Its guanine nucleotide exchange factor activity is repressed when bound to eIF2 complex phosphorylated on the alpha subunit, thereby limiting the amount of methionyl-initiator methionine tRNA available to the ribosome and consequently global translation is repressed. This is Translation initiation factor eIF2B subunit delta (tif224) from Schizosaccharomyces pombe (strain 972 / ATCC 24843) (Fission yeast).